We begin with the raw amino-acid sequence, 399 residues long: Probable inactive 2-oxoglutarate-dependent dioxygenase AOP2 (399 aa).

The 98-residue stretch at 248–345 (GGDDVEANDD…RYTAAIFTCP (98 aa)) folds into the Fe2OG dioxygenase domain. Fe cation is bound by residues His-268, Asp-270, and His-325. Arg-336 is a binding site for 2-oxoglutarate.

Belongs to the iron/ascorbate-dependent oxidoreductase family. It depends on Fe(2+) as a cofactor.

This chain is Probable inactive 2-oxoglutarate-dependent dioxygenase AOP2 (AOP2), found in Arabidopsis thaliana (Mouse-ear cress).